An 88-amino-acid chain; its full sequence is Small ribosomal subunit protein uS15 (88 aa).

Belongs to the universal ribosomal protein uS15 family. As to quaternary structure, part of the 30S ribosomal subunit. Forms a bridge to the 50S subunit in the 70S ribosome, contacting the 23S rRNA.

Functionally, one of the primary rRNA binding proteins, it binds directly to 16S rRNA where it helps nucleate assembly of the platform of the 30S subunit by binding and bridging several RNA helices of the 16S rRNA. In terms of biological role, forms an intersubunit bridge (bridge B4) with the 23S rRNA of the 50S subunit in the ribosome. The polypeptide is Small ribosomal subunit protein uS15 (Mesoplasma florum (strain ATCC 33453 / NBRC 100688 / NCTC 11704 / L1) (Acholeplasma florum)).